A 533-amino-acid polypeptide reads, in one-letter code: MKCHYEALGVRRDASEEELKKAYRKLALKWHPDKNLDNAAEAAEQFKLIQAAYDVLSDPQERAWYDNHREALLKGGLDGEYQDDSLDLLHYFTVTCYSGYGDDEKGFYTVYRNVFEMIAKEELESALEEDMEDFPTFGDSQSDYDTVVHPFYAYWQSFCTQKNFAWKEEYDTRQASNRWEKRAMEKENKKIRDKARKEKNELVRQLVAFIRKRDRRVQAHRKLVEEQNAEKARKAEAMRRQQKLKQAKLAEQYREQSWMAVADLEKELREMEAQYEKQFGDGSGEDEAEDQELRDGQDGKDSDEAEDAELYDGLYCPACDKSFKTEKAMRNHEKSKKHREMVALLKQQLEEEEANFSGPQTDENSLNANSEEEMEDAPKQKLSRKQKKKKQKPAQNYDDNFNENGIGEGVKIDPEDTNLNQNSAKESEDSLQENVGVTETVELCDDPKTEAKSVSKPKGKKAKDTKKSVRVPAEPQTMSDVLISCTTCHSEFPSRNKLFDHLKATGHARAPSSSTSLNSVTNSRNKKEKRKNR.

Positions 3–70 (CHYEALGVRR…ERAWYDNHRE (68 aa)) constitute a J domain. Disordered stretches follow at residues 278 to 311 (QFGDGSGEDEAEDQELRDGQDGKDSDEAEDAELY), 327 to 473 (KAMR…RVPA), and 503 to 533 (KATGHARAPSSSTSLNSVTNSRNKKEKRKNR). 2 positions are modified to phosphoserine: Ser-283 and Ser-302. The span at 291-302 (QELRDGQDGKDS) shows a compositional bias: basic and acidic residues. A C2H2-type 1 zinc finger spans residues 315-339 (YCPACDKSFKTEKAMRNHEKSKKHR). The segment covering 357 to 369 (SGPQTDENSLNAN) has biased composition (polar residues). The residue at position 370 (Ser-370) is a Phosphoserine. Positions 381–392 (KLSRKQKKKKQK) are enriched in basic residues. The segment covering 393–403 (PAQNYDDNFNE) has biased composition (polar residues). Basic residues predominate over residues 455–464 (SKPKGKKAKD). The C2H2-type 2 zinc finger occupies 484 to 508 (SCTTCHSEFPSRNKLFDHLKATGHA). Ser-512 carries the phosphoserine modification. A compositionally biased stretch (low complexity) spans 512–523 (SSSTSLNSVTNS). The segment covering 524 to 533 (RNKKEKRKNR) has biased composition (basic residues).

Interacts with HSPA8, PA2G4 and ZNF622.

Its subcellular location is the cytoplasm. It is found in the nucleus. The protein localises to the nucleolus. Functionally, may act as a co-chaperone for HSP70. May play a role in ribosomal RNA (rRNA) biogenesis, possibly in the maturation of the 60S subunit. Binds the precursor 45S rRNA. This chain is DnaJ homolog subfamily C member 21 (DNAJC21), found in Bos taurus (Bovine).